Reading from the N-terminus, the 961-residue chain is Valine--tRNA ligase (961 aa).

A 'HIGH' region motif is present at residues 48 to 58 (PNVTGSLHMGH). A 'KMSKS' region motif is present at residues 560-564 (KMSKS). Lys-563 contributes to the ATP binding site. Residues 892 to 961 (FINKDTELAR…QAQFKAIEAL (70 aa)) are a coiled coil.

Belongs to the class-I aminoacyl-tRNA synthetase family. ValS type 1 subfamily. Monomer.

It localises to the cytoplasm. The enzyme catalyses tRNA(Val) + L-valine + ATP = L-valyl-tRNA(Val) + AMP + diphosphate. Functionally, catalyzes the attachment of valine to tRNA(Val). As ValRS can inadvertently accommodate and process structurally similar amino acids such as threonine, to avoid such errors, it has a 'posttransfer' editing activity that hydrolyzes mischarged Thr-tRNA(Val) in a tRNA-dependent manner. This chain is Valine--tRNA ligase, found in Haemophilus ducreyi (strain 35000HP / ATCC 700724).